The following is a 344-amino-acid chain: Heat-inducible transcription repressor HrcA (344 aa).

It belongs to the HrcA family.

Negative regulator of class I heat shock genes (grpE-dnaK-dnaJ and groELS operons). Prevents heat-shock induction of these operons. In Streptococcus mutans serotype c (strain ATCC 700610 / UA159), this protein is Heat-inducible transcription repressor HrcA.